Here is a 91-residue protein sequence, read N- to C-terminus: uncharacterized protein (91 aa).

3 consecutive transmembrane segments (helical) span residues 6 to 26 (AAAV…INFF), 37 to 57 (MPVF…FVSI), and 68 to 88 (IVLN…GALL).

The protein resides in the cell membrane. This is an uncharacterized protein from Bacillus subtilis (strain 168).